The sequence spans 145 residues: D-aminoacyl-tRNA deacylase (145 aa).

The Gly-cisPro motif, important for rejection of L-amino acids motif lies at 137–138 (GP).

This sequence belongs to the DTD family. In terms of assembly, homodimer.

Its subcellular location is the cytoplasm. It carries out the reaction glycyl-tRNA(Ala) + H2O = tRNA(Ala) + glycine + H(+). The catalysed reaction is a D-aminoacyl-tRNA + H2O = a tRNA + a D-alpha-amino acid + H(+). Its function is as follows. An aminoacyl-tRNA editing enzyme that deacylates mischarged D-aminoacyl-tRNAs. Also deacylates mischarged glycyl-tRNA(Ala), protecting cells against glycine mischarging by AlaRS. Acts via tRNA-based rather than protein-based catalysis; rejects L-amino acids rather than detecting D-amino acids in the active site. By recycling D-aminoacyl-tRNA to D-amino acids and free tRNA molecules, this enzyme counteracts the toxicity associated with the formation of D-aminoacyl-tRNA entities in vivo and helps enforce protein L-homochirality. The polypeptide is D-aminoacyl-tRNA deacylase (Pseudomonas putida (strain W619)).